A 239-amino-acid polypeptide reads, in one-letter code: tRNA (guanine-N(7)-)-methyltransferase (239 aa).

S-adenosyl-L-methionine contacts are provided by Glu-68, Glu-93, Asp-120, and Asp-143. Residue Asp-143 is part of the active site. Substrate contacts are provided by residues Lys-147, Asp-180, and 217 to 220 (TKFE).

It belongs to the class I-like SAM-binding methyltransferase superfamily. TrmB family.

It carries out the reaction guanosine(46) in tRNA + S-adenosyl-L-methionine = N(7)-methylguanosine(46) in tRNA + S-adenosyl-L-homocysteine. Its pathway is tRNA modification; N(7)-methylguanine-tRNA biosynthesis. In terms of biological role, catalyzes the formation of N(7)-methylguanine at position 46 (m7G46) in tRNA. The protein is tRNA (guanine-N(7)-)-methyltransferase of Vibrio cholerae serotype O1 (strain ATCC 39315 / El Tor Inaba N16961).